The sequence spans 103 residues: Ig kappa-b5 chain C region (103 aa).

An Ig-like domain is found at 5 to 99; that stretch reads PTVLIFPPAP…GAGSVVQSFS (95 aa). A disulfide bridge links cysteine 26 with cysteine 85.

The chain is Ig kappa-b5 chain C region from Oryctolagus cuniculus (Rabbit).